The primary structure comprises 658 residues: MSVTTTETTGTAPALPRKTLGLAMIGLAVMMTLLHYAGLLPAWLHRLPEAIIPPFATWLDAIFNFVKDDLGLLALTRLLTDGLEVVLDATANLLFGKRRWPNIGPIPWSAIAAMTAVVGYYLGGWRMALLAGGTFVWTAMIGQWDIAMQTMSVLVVAAPLAFAIGLVLGISAWKSPSFDAVLRPVLAVLQTLPFFTYLLPAVIFFKVGPTAGAVATTVYAIPPMILMTTLGLQKVSPEVVEAGKMSGCTRWQMLRHVYIPAARTEILVGVNQVIMLCLAMVVLTAFIGMPGLGAKLLAMMGSFKIGRSFEIGVTIVLLAVTLDRMSKAWVVKLPEHFERGTPFWIRHKFLLMAIGAFVGFTLIAQVVPILSEVGRKQSWSQGKEIDTLIKGFLAIDAVQAITNSIRYVLNIWVLNPLRDFMLSIPTVAFVLFISAAALLVAGRREAVLAAAFFGLVALTGWWDRSVITLYSVLAAVSIALLLGVPIGVVAARKEKTANAVLLACDTAQTFPSFIYLIPAIMLFGITATSVVMSILIFSMVPLVRYTIEGLRNVPDEMTEAADMAGATRMQKLWNVQLPLALPTMAVGFNQAIMFAFFMVIIAAFIGTQDLGQELQRTLAGTDLGKNFVLGICVTLMALTFDMVIMKWADDKKARLGLN.

15 helical membrane passes run 20–40 (LGLAMIGLAVMMTLLHYAGLL), 103–123 (IGPIPWSAIAAMTAVVGYYLG), 127–147 (MALLAGGTFVWTAMIGQWDIA), 153–173 (VLVVAAPLAFAIGLVLGISAW), 185–205 (VLAVLQTLPFFTYLLPAVIFF), 212–232 (GAVATTVYAIPPMILMTTLGL), 273–293 (VIMLCLAMVVLTAFIGMPGLG), 300–320 (MGSFKIGRSFEIGVTIVLLAV), 349–369 (FLLMAIGAFVGFTLIAQVVPI), 420–440 (FMLSIPTVAFVLFISAAALLV), 447–467 (VLAAAFFGLVALTGWWDRSVI), 469–489 (LYSVLAAVSIALLLGVPIGVV), 517–537 (IPAIMLFGITATSVVMSILIF), 585–605 (AVGFNQAIMFAFFMVIIAAFI), and 627–647 (FVLGICVTLMALTFDMVIMKW). Positions 147 to 326 (AMQTMSVLVV…LLAVTLDRMS (180 aa)) constitute an ABC transmembrane type-1 1 domain. Residues 465–644 (SVITLYSVLA…LMALTFDMVI (180 aa)) enclose the ABC transmembrane type-1 2 domain.

It belongs to the binding-protein-dependent transport system permease family. The complex is probably composed of two ATP-binding proteins (TmoW), two transmembrane proteins (TmoV) and a solute-binding protein (TmoX).

The protein localises to the cell inner membrane. Functionally, part of the ABC transporter complex TmoXWV involved in trimethylamine N-oxide (TMAO) import. Responsible for the translocation of the substrate across the membrane. Is specific for TMAO and essential for TMAO metabolism. The sequence is that of Trimethylamine N-oxide transport system permease protein TmoV from Ruegeria pomeroyi (strain ATCC 700808 / DSM 15171 / DSS-3) (Silicibacter pomeroyi).